The primary structure comprises 424 residues: CinA-like protein (424 aa).

It belongs to the CinA family.

This chain is CinA-like protein, found in Shewanella halifaxensis (strain HAW-EB4).